Consider the following 295-residue polypeptide: Nucleotide-binding protein YjiE (295 aa).

12–19 contributes to the ATP binding site; that stretch reads GMSGAGKT. 63 to 66 is a binding site for GTP; it reads DMRS.

It belongs to the RapZ-like family.

Displays ATPase and GTPase activities. In Lactococcus lactis subsp. lactis (strain IL1403) (Streptococcus lactis), this protein is Nucleotide-binding protein YjiE (yjiE).